A 307-amino-acid chain; its full sequence is Ribosomal RNA small subunit methyltransferase A (307 aa).

Residues Asn35, Val37, Gly62, Glu83, Asp113, and Asn136 each coordinate S-adenosyl-L-methionine.

It belongs to the class I-like SAM-binding methyltransferase superfamily. rRNA adenine N(6)-methyltransferase family. RsmA subfamily.

It localises to the cytoplasm. The catalysed reaction is adenosine(1518)/adenosine(1519) in 16S rRNA + 4 S-adenosyl-L-methionine = N(6)-dimethyladenosine(1518)/N(6)-dimethyladenosine(1519) in 16S rRNA + 4 S-adenosyl-L-homocysteine + 4 H(+). In terms of biological role, specifically dimethylates two adjacent adenosines (A1518 and A1519) in the loop of a conserved hairpin near the 3'-end of 16S rRNA in the 30S particle. May play a critical role in biogenesis of 30S subunits. The sequence is that of Ribosomal RNA small subunit methyltransferase A from Bifidobacterium longum (strain DJO10A).